The following is an 82-amino-acid chain: MSAPWTLSPEPLPPSTGPPVGAGLDVEQRTVFAFVLCLLVVLVLLMVRCVRILLDPYSRMPASSWTDHKEALERGQFDYALV.

Positions 1 to 20 are disordered; that stretch reads MSAPWTLSPEPLPPSTGPPV. Residues 30–50 traverse the membrane as a helical segment; it reads TVFAFVLCLLVVLVLLMVRCV.

Belongs to the cortexin family. As to expression, neuron specific.

Its subcellular location is the membrane. Functionally, may mediate extracellular or intracellular signaling of cortical neurons during forebrain development. This chain is Cortexin-1 (Ctxn1), found in Rattus norvegicus (Rat).